The primary structure comprises 252 residues: HTH-type transcriptional regulator XynR (252 aa).

Positions 4–66 constitute an HTH iclR-type domain; it reads IQSVERALQI…PENGKYRLGM (63 aa). Residues 25 to 45 constitute a DNA-binding region (H-T-H motif); the sequence is KITDISKLMGLSKSTLHSLLK. An IclR-ED domain is found at 81-250; it reads IRQKAKGWLT…GLALSRALGY (170 aa).

Activity may be controlled by xylonate. Involved in regulation of xylonate catabolism. Represses the expression of both yagA and yagEF operons. Binds mainly at a single site within the spacer of the bidirectional transcription units yagA and yagEF. In Escherichia coli (strain K12), this protein is HTH-type transcriptional regulator XynR.